The following is an 857-amino-acid chain: Phosphoenolpyruvate carboxylase (857 aa).

Active-site residues include histidine 144 and lysine 530.

This sequence belongs to the PEPCase type 1 family. Homotetramer. Mg(2+) is required as a cofactor. Post-translationally, the N-terminus is blocked.

It carries out the reaction oxaloacetate + phosphate = phosphoenolpyruvate + hydrogencarbonate. Functionally, forms oxaloacetate, a four-carbon dicarboxylic acid source for the tricarboxylic acid cycle. The sequence is that of Phosphoenolpyruvate carboxylase (ppc) from Thermus sp. (strain 71).